The primary structure comprises 518 residues: Arrestin-related trafficking adapter 10 (518 aa).

Lys-118 participates in a covalent cross-link: Glycyl lysine isopeptide (Lys-Gly) (interchain with G-Cter in ubiquitin).

The protein belongs to the ART10 family. As to quaternary structure, interacts with RSP5. In terms of processing, ubiquitinated by RSP5.

The protein resides in the cytoplasm. May regulate endocytosis by recruiting RSP5 ubiquitin ligase activity to specific plasma membrane proteins in response to extracellular stimuli. This chain is Arrestin-related trafficking adapter 10 (ART10), found in Saccharomyces cerevisiae (strain ATCC 204508 / S288c) (Baker's yeast).